The following is a 226-amino-acid chain: Agamous-like MADS-box protein AGL23 (226 aa).

The MADS-box domain occupies 6-66 (LGRRKVEIVK…GKVFSFGHPN (61 aa)). Residues 95-132 (VQMLNKSYTEVKAEVEKEQKNKQSRAQNERENENAEEW) adopt a coiled-coil conformation. Residues 108–127 (EVEKEQKNKQSRAQNERENE) show a composition bias toward basic and acidic residues. The interval 108 to 131 (EVEKEQKNKQSRAQNERENENAEE) is disordered.

The protein resides in the nucleus. Probable transcription factor that controls female gametophyte (megagametogenesis) development and chloroplast biogenesis during embryo development. This is Agamous-like MADS-box protein AGL23 from Arabidopsis thaliana (Mouse-ear cress).